Consider the following 317-residue polypeptide: MEQSNYSVYADFILLGLFSNARFPWLLFALILLVFLTSIASNVVKIILIHIDSRLHTPMYFLLSQLSLRDILYISTIVPKMLVDQVMSQRAISFAGCTAQHFLYLTLAGAEFFLLGLMSYDRYVAICNPLHYPVLMSRKICWLIVAAAWLGGSIDGFLLTPVTMQFPFCASREINHFFCEVPALLKLSCTDTSAYETAMYVCCIMMLLIPFSVISGSYTRILITVYRMSEAEGRGKAVATCSSHMVVVSLFYGAAMYTYVLPHSYHTPEQDKAVSAFYTILTPMLNPLIYSLRNKDVTGALQKVVGRCVSSGKVTTF.

Residues 1–22 are Extracellular-facing; sequence MEQSNYSVYADFILLGLFSNAR. Asn-5 carries N-linked (GlcNAc...) asparagine glycosylation. Residues 23 to 43 form a helical membrane-spanning segment; it reads FPWLLFALILLVFLTSIASNV. Residues 44–60 lie on the Cytoplasmic side of the membrane; the sequence is VKIILIHIDSRLHTPMY. Residues 61–83 traverse the membrane as a helical segment; the sequence is FLLSQLSLRDILYISTIVPKMLV. At 84-97 the chain is on the extracellular side; that stretch reads DQVMSQRAISFAGC. Residues Cys-97 and Cys-189 are joined by a disulfide bond. The helical transmembrane segment at 98 to 118 threads the bilayer; that stretch reads TAQHFLYLTLAGAEFFLLGLM. At 119 to 139 the chain is on the cytoplasmic side; that stretch reads SYDRYVAICNPLHYPVLMSRK. A helical transmembrane segment spans residues 140–160; that stretch reads ICWLIVAAAWLGGSIDGFLLT. Over 161–197 the chain is Extracellular; it reads PVTMQFPFCASREINHFFCEVPALLKLSCTDTSAYET. Residues 198–218 traverse the membrane as a helical segment; that stretch reads AMYVCCIMMLLIPFSVISGSY. Topologically, residues 219 to 244 are cytoplasmic; the sequence is TRILITVYRMSEAEGRGKAVATCSSH. Residues 245-265 form a helical membrane-spanning segment; it reads MVVVSLFYGAAMYTYVLPHSY. The Extracellular segment spans residues 266–271; the sequence is HTPEQD. The chain crosses the membrane as a helical span at residues 272-292; the sequence is KAVSAFYTILTPMLNPLIYSL. The Cytoplasmic segment spans residues 293–317; that stretch reads RNKDVTGALQKVVGRCVSSGKVTTF.

It belongs to the G-protein coupled receptor 1 family.

It localises to the cell membrane. In terms of biological role, odorant receptor. This Homo sapiens (Human) protein is Olfactory receptor 2T27 (OR2T27).